Consider the following 552-residue polypeptide: Harmonin (552 aa).

The segment at 1 to 86 (MDRKVAREFR…LTPRRSRKLK (86 aa)) is N-terminal domain. PDZ domains follow at residues 87 to 169 (EVRL…HIGL) and 211 to 293 (KVFI…AAAG). The segment at 194–552 (GVRGSLGSPG…KEYDDELTFF (359 aa)) is mediates interaction with MYO7B. Serine 219 carries the post-translational modification Phosphoserine. A coiled-coil region spans residues 310–377 (RELQRQELLM…EKFKKQWEED (68 aa)). A disordered region spans residues 401–427 (KPKYDQGVEPELEPADDLDGGTEEQGE). The span at 408–427 (VEPELEPADDLDGGTEEQGE) shows a compositional bias: acidic residues. A PDZ 3 domain is found at 452–537 (DVRLLRIKKE…QGGDWIDLVV (86 aa)).

Part of the IMAC/intermicrovillar adhesion complex/intermicrovillar tip-link complex composed of ANKS4B, MYO7B, USH1C, CDHR2 and CDHR5. Part of a complex composed of USH1C, USH1G and MYO7A. Interacts with F-actin. Interacts with USH2A. Interacts with SLC4A7. Interacts (via PDZ1 domain) with the C-terminus of USHBP1. Interacts (via N-terminus and PDZ 2 domain) with CDH23. Interacts with USH1G. Interacts with MYO7B. Interacts with CDHR2 and CDHR5; may mediate their interaction with MYO7B at the microvilli tip. Interacts (via PDZ 1 domain) with ANKS4B. Interacts (via PDZ 1 domain) with DOCK4. As to expression, expressed in small intestine, colon, kidney, eye and weakly in pancreas. Expressed also in vestibule of the inner ear.

It localises to the cytoplasm. It is found in the cytosol. Its subcellular location is the cytoskeleton. The protein resides in the cell projection. The protein localises to the microvillus. Anchoring/scaffolding protein that is a part of the functional network formed by USH1C, USH1G, CDH23 and MYO7A that mediates mechanotransduction in cochlear hair cells. Required for normal development and maintenance of cochlear hair cell bundles. As part of the intermicrovillar adhesion complex/IMAC plays a role in brush border differentiation, controlling microvilli organization and length. Probably plays a central regulatory role in the assembly of the complex, recruiting CDHR2, CDHR5 and MYO7B to the microvilli tips. The sequence is that of Harmonin (USH1C) from Homo sapiens (Human).